The chain runs to 296 residues: Enoyl-CoA hydratase AKT3-2 (296 aa).

A Peroxisomal targeting signal type 1 motif is present at residues P294–L296.

Belongs to the enoyl-CoA hydratase/isomerase family.

It localises to the peroxisome. It carries out the reaction a (3S)-3-hydroxyacyl-CoA = a (2E)-enoyl-CoA + H2O. The catalysed reaction is a 4-saturated-(3S)-3-hydroxyacyl-CoA = a (3E)-enoyl-CoA + H2O. Its pathway is mycotoxin biosynthesis. Enoyl-CoA hydratase; part of the gene clusters that mediate the biosynthesis of the host-selective toxins (HSTs) AK-toxins responsible for Japanese pear black spot disease by the Japanese pear pathotype. AK-toxins are esters of 9,10-epoxy 8-hydroxy 9-methyldecatrienoic acid (EDA). On cellular level, AK-toxins affect plasma membrane of susceptible cells and cause a sudden increase in loss of K(+) after a few minutes of toxin treatment. The acyl-CoA ligase AKT1, the hydrolase AKT2 and enoyl-CoA hydratase AKT3 are all involved in the biosynthesis of the AK-, AF- and ACT-toxin common 9,10-epoxy-8-hydroxy-9-methyl-decatrienoic acid (EDA) structural moiety. Part of the EDA biosynthesis occurs in the peroxisome since these 3 enzymes are localized in peroxisomes. The exact roles of the 3 enzymes, as well as of additional AK-toxin clusters enzymes, including AKT4, AKT6 and AKTS1, have still to be elucidated. The Cytochrome P450 monooxygenase AKT7 on the other side functions to limit production of EDA and AK-toxin, probably via the catalysis of a side reaction of EDA or its precursor. This chain is Enoyl-CoA hydratase AKT3-2, found in Alternaria alternata (Alternaria rot fungus).